We begin with the raw amino-acid sequence, 293 residues long: Cytidine deaminase (293 aa).

2 consecutive CMP/dCMP-type deaminase domains span residues 47–166 (EDRA…FGPA) and 186–293 (ESED…YQAV). 88 to 90 (NME) serves as a coordination point for substrate. A Zn(2+)-binding site is contributed by H101. The Proton donor role is filled by E103. Zn(2+) is bound by residues C128 and C131.

The protein belongs to the cytidine and deoxycytidylate deaminase family. In terms of assembly, homodimer. The cofactor is Zn(2+).

It catalyses the reaction cytidine + H2O + H(+) = uridine + NH4(+). The catalysed reaction is 2'-deoxycytidine + H2O + H(+) = 2'-deoxyuridine + NH4(+). Functionally, this enzyme scavenges exogenous and endogenous cytidine and 2'-deoxycytidine for UMP synthesis. The polypeptide is Cytidine deaminase (Aeromonas salmonicida (strain A449)).